Here is a 158-residue protein sequence, read N- to C-terminus: Arginine repressor (158 aa).

Belongs to the ArgR family.

It localises to the cytoplasm. It functions in the pathway amino-acid biosynthesis; L-arginine biosynthesis [regulation]. Regulates arginine biosynthesis genes. The sequence is that of Arginine repressor from Anaeromyxobacter sp. (strain Fw109-5).